We begin with the raw amino-acid sequence, 545 residues long: Chaperonin GroEL (545 aa).

Residues 30–33, Lys51, 87–91, Gly415, 479–481, and Asp495 each bind ATP; these read TLGP, DGTTT, and NAA.

This sequence belongs to the chaperonin (HSP60) family. In terms of assembly, forms a cylinder of 14 subunits composed of two heptameric rings stacked back-to-back. Interacts with the co-chaperonin GroES.

It is found in the cytoplasm. It catalyses the reaction ATP + H2O + a folded polypeptide = ADP + phosphate + an unfolded polypeptide.. Together with its co-chaperonin GroES, plays an essential role in assisting protein folding. The GroEL-GroES system forms a nano-cage that allows encapsulation of the non-native substrate proteins and provides a physical environment optimized to promote and accelerate protein folding. The chain is Chaperonin GroEL from Tolumonas auensis (strain DSM 9187 / NBRC 110442 / TA 4).